Consider the following 101-residue polypeptide: Urease subunit beta (101 aa).

Belongs to the urease beta subunit family. Heterotrimer of UreA (gamma), UreB (beta) and UreC (alpha) subunits. Three heterotrimers associate to form the active enzyme.

Its subcellular location is the cytoplasm. It carries out the reaction urea + 2 H2O + H(+) = hydrogencarbonate + 2 NH4(+). The protein operates within nitrogen metabolism; urea degradation; CO(2) and NH(3) from urea (urease route): step 1/1. This is Urease subunit beta from Burkholderia pseudomallei (strain 668).